The chain runs to 129 residues: Small ribosomal subunit protein uS11 (129 aa).

Belongs to the universal ribosomal protein uS11 family. As to quaternary structure, part of the 30S ribosomal subunit. Interacts with proteins S7 and S18. Binds to IF-3.

Located on the platform of the 30S subunit, it bridges several disparate RNA helices of the 16S rRNA. Forms part of the Shine-Dalgarno cleft in the 70S ribosome. The protein is Small ribosomal subunit protein uS11 of Staphylococcus carnosus (strain TM300).